A 212-amino-acid polypeptide reads, in one-letter code: Small ribosomal subunit protein uS5 (212 aa).

The S5 DRBM domain occupies 48–111; that stretch reads LDDEVLDINM…EVAKLNIIDV (64 aa).

It belongs to the universal ribosomal protein uS5 family. In terms of assembly, part of the 30S ribosomal subunit. Contacts protein S4.

Functionally, with S4 and S12 plays an important role in translational accuracy. In Halobacterium salinarum (strain ATCC 700922 / JCM 11081 / NRC-1) (Halobacterium halobium), this protein is Small ribosomal subunit protein uS5.